We begin with the raw amino-acid sequence, 419 residues long: 26S proteasome regulatory subunit 8 homolog B (419 aa).

202-209 lines the ATP pocket; that stretch reads GPPGTGKT. Lysine 406 participates in a covalent cross-link: Glycyl lysine isopeptide (Lys-Gly) (interchain with G-Cter in ubiquitin).

It belongs to the AAA ATPase family. As to quaternary structure, component of the 19S regulatory particle (RP/PA700) base subcomplex of the 26S proteasome. The 26S proteasome is composed of a core protease (CP), known as the 20S proteasome, capped at one or both ends by the 19S regulatory particle (RP/PA700). The RP/PA700 complex is composed of at least 17 different subunits in two subcomplexes, the base and the lid, which form the portions proximal and distal to the 20S proteolytic core, respectively.

The protein resides in the cytoplasm. Its subcellular location is the nucleus. Functionally, the 26S proteasome is involved in the ATP-dependent degradation of ubiquitinated proteins. The regulatory (or ATPase) complex confers ATP dependency and substrate specificity to the 26S complex. In Arabidopsis thaliana (Mouse-ear cress), this protein is 26S proteasome regulatory subunit 8 homolog B (RPT6B).